A 364-amino-acid polypeptide reads, in one-letter code: Mitogen-activated protein kinase 11 (364 aa).

In terms of domain architecture, Protein kinase spans 24 to 308; sequence LQGLRPVGSG…AAEALAHAYF (285 aa). Residues 30–38 and Lys-53 each bind ATP; that span reads VGSGAYGSV. Nilotinib is bound at residue Glu-71. Residue Asp-168 is the Proton acceptor of the active site. Thr-180 carries the phosphothreonine; by MAP2K3, MAP2K4 and MAP2K6 modification. A TXY motif is present at residues 180-182; the sequence is TGY. The residue at position 182 (Tyr-182) is a Phosphotyrosine; by MAP2K3, MAP2K4 and MAP2K6. Residues 312 to 331 form a disordered region; that stretch reads HDPDDEPEAEPYDESVEAKE. Residues 314–326 show a composition bias toward acidic residues; it reads PDDEPEAEPYDES. Position 323 is a phosphotyrosine; by ZAP70 (Tyr-323).

It belongs to the protein kinase superfamily. CMGC Ser/Thr protein kinase family. MAP kinase subfamily. Interacts with HDAC3 and DUSP16. The cofactor is Mg(2+). In terms of processing, dually phosphorylated on Thr-180 and Tyr-182 by MAP2K3/MKK3, MAP2K4/MKK4 and MAP2K6/MKK6, which activates the enzyme.

It localises to the cytoplasm. The protein localises to the nucleus. It catalyses the reaction L-seryl-[protein] + ATP = O-phospho-L-seryl-[protein] + ADP + H(+). The enzyme catalyses L-threonyl-[protein] + ATP = O-phospho-L-threonyl-[protein] + ADP + H(+). With respect to regulation, activated by phosphorylation on threonine and tyrosine by MAP2K3/MKK3, MAP2K4/MKK4 and MAP2K6/MKK6. MAP2K3/MKK3 and MAP2K6/MKK6 are both essential for the activation of MAPK11 induced by environmental stress. HDAC3 interacts directly and selectively with MAPK11 to repress ATF2 transcriptional activity, and regulate TNF gene expression in LPS-stimulated cells. Inhibited by SB203580 and pyridinyl-imidazole related compounds. In terms of biological role, serine/threonine kinase which acts as an essential component of the MAP kinase signal transduction pathway. MAPK11 is one of the four p38 MAPKs which play an important role in the cascades of cellular responses evoked by extracellular stimuli such as pro-inflammatory cytokines or physical stress leading to direct activation of transcription factors. Accordingly, p38 MAPKs phosphorylate a broad range of proteins and it has been estimated that they may have approximately 200 to 300 substrates each. MAPK11 functions are mostly redundant with those of MAPK14. Some of the targets are downstream kinases which are activated through phosphorylation and further phosphorylate additional targets. RPS6KA5/MSK1 and RPS6KA4/MSK2 can directly phosphorylate and activate transcription factors such as CREB1, ATF1, the NF-kappa-B isoform RELA/NFKB3, STAT1 and STAT3, but can also phosphorylate histone H3 and the nucleosomal protein HMGN1. RPS6KA5/MSK1 and RPS6KA4/MSK2 play important roles in the rapid induction of immediate-early genes in response to stress or mitogenic stimuli, either by inducing chromatin remodeling or by recruiting the transcription machinery. On the other hand, two other kinase targets, MAPKAPK2/MK2 and MAPKAPK3/MK3, participate in the control of gene expression mostly at the post-transcriptional level, by phosphorylating ZFP36 (tristetraprolin) and ELAVL1, and by regulating EEF2K, which is important for the elongation of mRNA during translation. MKNK1/MNK1 and MKNK2/MNK2, two other kinases activated by p38 MAPKs, regulate protein synthesis by phosphorylating the initiation factor EIF4E2. In the cytoplasm, the p38 MAPK pathway is an important regulator of protein turnover. For example, CFLAR is an inhibitor of TNF-induced apoptosis whose proteasome-mediated degradation is regulated by p38 MAPK phosphorylation. Ectodomain shedding of transmembrane proteins is regulated by p38 MAPKs as well. In response to inflammatory stimuli, p38 MAPKs phosphorylate the membrane-associated metalloprotease ADAM17. Such phosphorylation is required for ADAM17-mediated ectodomain shedding of TGF-alpha family ligands, which results in the activation of EGFR signaling and cell proliferation. Additional examples of p38 MAPK substrates are the FGFR1. FGFR1 can be translocated from the extracellular space into the cytosol and nucleus of target cells, and regulates processes such as rRNA synthesis and cell growth. FGFR1 translocation requires p38 MAPK activation. In the nucleus, many transcription factors are phosphorylated and activated by p38 MAPKs in response to different stimuli. Classical examples include ATF1, ATF2, ATF6, ELK1, PTPRH, DDIT3, TP53/p53 and MEF2C and MEF2A. The p38 MAPKs are emerging as important modulators of gene expression by regulating chromatin modifiers and remodelers. The promoters of several genes involved in the inflammatory response, such as IL6, IL8 and IL12B, display a p38 MAPK-dependent enrichment of histone H3 phosphorylation on 'Ser-10' (H3S10ph) in LPS-stimulated myeloid cells. This phosphorylation enhances the accessibility of the cryptic NF-kappa-B-binding sites marking promoters for increased NF-kappa-B recruitment. Phosphorylates methyltransferase DOT1L on 'Ser-834', 'Thr-900', 'Ser-902', 'Thr-984', 'Ser-1001', 'Ser-1009' and 'Ser-1104'. The sequence is that of Mitogen-activated protein kinase 11 (Mapk11) from Mus musculus (Mouse).